The sequence spans 217 residues: FGFR1 oncogene partner 2 homolog (217 aa).

2 coiled-coil regions span residues 6–106 and 163–188; these read TIEK…MSKY and KEQE…TRES. The disordered stretch occupies residues 194–217; sequence KEDASESTSLSGLVTSSDLSLRKS. Positions 199–217 are enriched in polar residues; sequence ESTSLSGLVTSSDLSLRKS.

It belongs to the SIKE family.

It localises to the cytoplasm. The protein is FGFR1 oncogene partner 2 homolog (FGFR1OP2) of Gallus gallus (Chicken).